The sequence spans 530 residues: Chondroitin sulfate N-acetylgalactosaminyltransferase 1 (530 aa).

Topologically, residues 1–12 (MVRRGLLGWISR) are cytoplasmic. The chain crosses the membrane as a helical; Signal-anchor for type II membrane protein span at residues 13–33 (VVILLVLLCCAISVLYMLACT). Residues 34–530 (PKGDQEQLGL…QKQKASSKKT (497 aa)) are Lumenal-facing. Residues 57-93 (AVLQEREEQHRNYVNSLKRQIAQLKDELQARSEQFRS) adopt a coiled-coil conformation. The tract at residues 88-107 (SEQFRSGQDQASDATSLRSG) is disordered. Over residues 91-105 (FRSGQDQASDATSLR) the composition is skewed to polar residues. N-linked (GlcNAc...) asparagine glycosylation is found at asparagine 313 and asparagine 322. 2 residues coordinate a divalent metal cation: aspartate 358 and histidine 475.

The protein belongs to the chondroitin N-acetylgalactosaminyltransferase family.

It is found in the golgi apparatus. The protein localises to the golgi stack membrane. The enzyme catalyses 3-O-(beta-D-GlcA-(1-&gt;3)-beta-D-Gal-(1-&gt;3)-beta-D-Gal-(1-&gt;4)-beta-D-Xyl)-L-seryl-[protein] + UDP-N-acetyl-alpha-D-galactosamine = 3-O-(beta-D-GalNAc-(1-&gt;4)-beta-D-GlcA-(1-&gt;3)-beta-D-Gal-(1-&gt;3)-beta-D-Gal-(1-&gt;4)-beta-D-Xyl)-L-seryl-[protein] + UDP + H(+). Its function is as follows. Transfers 1,4-N-acetylgalactosamine (GalNAc) from UDP-GalNAc to the non-reducing end of glucuronic acid (GlcUA). Required for addition of the first GalNAc to the core tetrasaccharide linker and for elongation of chondroitin chains. Important role in chondroitin chain biosynthesis in cartilage formation, and subsequent endochondral ossification. Moreover, is involved in the metabolism of aggrecan. The polypeptide is Chondroitin sulfate N-acetylgalactosaminyltransferase 1 (Mus musculus (Mouse)).